Here is a 430-residue protein sequence, read N- to C-terminus: Tapasin (430 aa).

The signal sequence occupies residues 1–15 (MAAGLRLLLAGLCWS). Residues 16–399 (QFRVEDAASP…TEGPHLEDIT (384 aa)) are Lumenal-facing. C34 and C99 form a disulfide bridge. The disordered stretch occupies residues 61-128 (GDAETPPEPG…PDARSPPTAG (68 aa)). N78 is a glycosylation site (N-linked (GlcNAc...) asparagine). Over residues 101–111 (LNPTNPQTGSD) the composition is skewed to polar residues. 2 Ig-like C1-type domains span residues 139–273 (PQYG…LQLH) and 278–382 (PKVT…MRVS). C299 and C368 are oxidised to a cystine. The disordered stretch occupies residues 316–342 (RAGGSGTSQSPRDTVMDSWTSGHRQAA). Residues 322 to 338 (TSQSPRDTVMDSWTSGH) show a composition bias toward polar residues. Residues 400–417 (GLFLVAFVLCGLIRWLYP) traverse the membrane as a helical segment. Over 418 to 430 (KAARPKEETKKSQ) the chain is Cytoplasmic.

Interacts with TAP1 and is thus a subunit of the TAP complex. Interaction with TAP1 is TAP2 independent and is required for efficient peptide-TAP interaction. Obligatory mediator for the interaction between newly assembled MHC class I molecules, calreticulin, ERp57 and TAP. Up to 4 MHC class I/tapasin complexes bind to 1 TAP.

It localises to the endoplasmic reticulum membrane. In terms of biological role, involved in the association of MHC class I with transporter associated with antigen processing (TAP) and in the assembly of MHC class I with peptide (peptide loading). The chain is Tapasin (TAPBP) from Gallus gallus (Chicken).